A 261-amino-acid chain; its full sequence is MKISEPPAISKPTRDESELIRMYLKTIICDFKAPMLIAFPILMGLMLKETVKSSLFLRFIIMLLPFSYSALECFLLFRNNLESSYRSELHKMPYSIFNVLLIAFSVISILSIAIFPLSTWSNNDVSSYSMLLPCLIVPLTYMLSISCSLVSGSILFTDTGIDILIDASLLLCTLLLLVFWIIESKYFPYFVFASLILVLIRSFRTRHAPSKENSLPVTAWRVVVFGSILVLSIVIYGSIAYELLDPIHQGWKTIERRIHHL.

The protein belongs to the UPF0328 family.

The protein is UPF0328 protein ECU06_0100 of Encephalitozoon cuniculi (strain GB-M1) (Microsporidian parasite).